A 105-amino-acid polypeptide reads, in one-letter code: Iron-sulfur cluster assembly protein CyaY (105 aa).

Belongs to the frataxin family.

Involved in iron-sulfur (Fe-S) cluster assembly. May act as a regulator of Fe-S biogenesis. In Paraburkholderia phytofirmans (strain DSM 17436 / LMG 22146 / PsJN) (Burkholderia phytofirmans), this protein is Iron-sulfur cluster assembly protein CyaY.